The following is a 315-amino-acid chain: MKSSEPAPATPTGFRNSIWFIIFYLFVIQALGSAIISGGIEFAIAYAMYHSRVDLITLWAFPHTISGDCALSLFIQVGLTWASEEILVGFDDYKRPVFRLNKWITKPSPLKTESNEEIPPPKKRFIVDYFESKDNVVAKQNTLYHKHNWLFGYLEVNRGIIPKGKEATLKGFLTSQFIHDSTQSKFMNFIEWFVQKFIRSMILAIAMFIVIWPVTMGILAGIGHKVGSHDYYFNDYPLPQVMKLIYAVVIAFVCTPVAIIVIVLRNQFHEELYYEGLANGTLQQDQEVCSTGNRSSGSTDQDISTTKQQSQEAVA.

Helical transmembrane passes span 18–38 (IWFI…IISG), 202–222 (ILAI…LAGI), and 244–264 (LIYA…VIVL). The interval 288–315 (VCSTGNRSSGSTDQDISTTKQQSQEAVA) is disordered.

It is found in the membrane. This is an uncharacterized protein from Saccharomyces cerevisiae (strain ATCC 204508 / S288c) (Baker's yeast).